The following is a 452-amino-acid chain: Exodeoxyribonuclease 7 large subunit (452 aa).

This sequence belongs to the XseA family. In terms of assembly, heterooligomer composed of large and small subunits.

The protein resides in the cytoplasm. It carries out the reaction Exonucleolytic cleavage in either 5'- to 3'- or 3'- to 5'-direction to yield nucleoside 5'-phosphates.. Bidirectionally degrades single-stranded DNA into large acid-insoluble oligonucleotides, which are then degraded further into small acid-soluble oligonucleotides. This chain is Exodeoxyribonuclease 7 large subunit, found in Bacillus cereus (strain 03BB102).